The sequence spans 1106 residues: Translation initiation factor IF-2 (1106 aa).

Low complexity-rich tracts occupy residues 57–72 (GKAA…PDAG) and 81–97 (APST…SAPP). Disordered stretches follow at residues 57–434 (GKAA…QKVH) and 466–497 (PSKP…RQRR). Composition is skewed to pro residues over residues 113–123 (PAKPAPSAPPS) and 138–148 (PAKPAPSAPPS). A compositionally biased stretch (low complexity) spans 172-199 (AKPVAKPASAPAPARPAQPLRPQASNRP). 2 stretches are compositionally biased toward pro residues: residues 200–214 (PQQP…PAAK) and 223–235 (TAPP…PGAP). Composition is skewed to low complexity over residues 251–292 (PNQQ…QQRR), 319–329 (PQGRQGGAPSR), and 395–405 (YRPAAAPGMAG). The segment covering 408–422 (RRPDWDDSARLDALR) has biased composition (basic and acidic residues). The span at 482–497 (ALRRRKKETTRQRQRR) shows a compositional bias: basic residues. The tr-type G domain maps to 598–771 (RRPPVVTVMG…LLVTEVEDLK (174 aa)). The G1 stretch occupies residues 607 to 614 (GHVDHGKT). 607 to 614 (GHVDHGKT) is a binding site for GTP. The tract at residues 632 to 636 (GITQH) is G2. The tract at residues 657–660 (DTPG) is G3. Residues 657-661 (DTPGH) and 711-714 (NKVD) contribute to the GTP site. The segment at 711 to 714 (NKVD) is G4. The G5 stretch occupies residues 747–749 (SAL).

Belongs to the TRAFAC class translation factor GTPase superfamily. Classic translation factor GTPase family. IF-2 subfamily.

The protein localises to the cytoplasm. Its function is as follows. One of the essential components for the initiation of protein synthesis. Protects formylmethionyl-tRNA from spontaneous hydrolysis and promotes its binding to the 30S ribosomal subunits. Also involved in the hydrolysis of GTP during the formation of the 70S ribosomal complex. This is Translation initiation factor IF-2 from Synechococcus sp. (strain RCC307).